A 476-amino-acid polypeptide reads, in one-letter code: Bifunctional protein HldE (476 aa).

Residues 1–318 (MKPILPDYNN…AEAIHGSRDT (318 aa)) are ribokinase. ATP is bound at residue 195 to 198 (NMSE). Asp264 is a catalytic residue. Positions 344–476 (MTNGCFDILH…IIDAIKGGRG (133 aa)) are cytidylyltransferase.

It in the N-terminal section; belongs to the carbohydrate kinase PfkB family. In the C-terminal section; belongs to the cytidylyltransferase family. As to quaternary structure, homodimer.

The catalysed reaction is D-glycero-beta-D-manno-heptose 7-phosphate + ATP = D-glycero-beta-D-manno-heptose 1,7-bisphosphate + ADP + H(+). It catalyses the reaction D-glycero-beta-D-manno-heptose 1-phosphate + ATP + H(+) = ADP-D-glycero-beta-D-manno-heptose + diphosphate. It participates in nucleotide-sugar biosynthesis; ADP-L-glycero-beta-D-manno-heptose biosynthesis; ADP-L-glycero-beta-D-manno-heptose from D-glycero-beta-D-manno-heptose 7-phosphate: step 1/4. It functions in the pathway nucleotide-sugar biosynthesis; ADP-L-glycero-beta-D-manno-heptose biosynthesis; ADP-L-glycero-beta-D-manno-heptose from D-glycero-beta-D-manno-heptose 7-phosphate: step 3/4. The protein operates within bacterial outer membrane biogenesis; LPS core biosynthesis. Its function is as follows. Catalyzes the phosphorylation of D-glycero-D-manno-heptose 7-phosphate at the C-1 position to selectively form D-glycero-beta-D-manno-heptose-1,7-bisphosphate. Catalyzes the ADP transfer from ATP to D-glycero-beta-D-manno-heptose 1-phosphate, yielding ADP-D-glycero-beta-D-manno-heptose. This Vibrio vulnificus (strain YJ016) protein is Bifunctional protein HldE.